Reading from the N-terminus, the 370-residue chain is Gap junction delta-4 protein (370 aa).

Over 1–19 (MEGVDLLGFLIITLNCNVT) the chain is Cytoplasmic. A helical membrane pass occupies residues 20 to 40 (MVGKLWFVLTMLLRMLVIVLA). At 41–76 (GRPVYQDEQERFVCNTLQPGCANVCYDVFSPVSHLR) the chain is on the extracellular side. Residues 77 to 97 (FWLIQGVCVLLPSAVFSVYVL) form a helical membrane-spanning segment. Residues 98 to 146 (HRGATLAALGPRRCPDPREPASGQRRCPRPFGERGGLQVPDFSAGYIIH) are Cytoplasmic-facing. A helical transmembrane segment spans residues 147-167 (LLLRTLLEAAFGALHYFLFGF). The Extracellular portion of the chain corresponds to 168–196 (LAPKKFPCTRPPCTGVVDCYVSRPTEKSL). The chain crosses the membrane as a helical span at residues 197-217 (LMLFLWAVSALSFLLGLADLV). Residues 218-370 (CSLRRRMRRR…HLRARKSEWV (153 aa)) lie on the Cytoplasmic side of the membrane. The segment at 224–370 (MRRRPGPPTS…HLRARKSEWV (147 aa)) is disordered. Over residues 246 to 260 (AEGRRTDEEGGREEE) the composition is skewed to basic and acidic residues. Positions 331 to 346 (PSAAPSRLAAPPSCSS) are enriched in low complexity.

Belongs to the connexin family. Delta-type subfamily. A connexon is composed of a hexamer of connexins. Expressed in pancreas, kidney, skeletal muscle, liver, placenta, and heart.

It is found in the cell membrane. The protein resides in the cell junction. It localises to the gap junction. In terms of biological role, one gap junction consists of a cluster of closely packed pairs of transmembrane channels, the connexons, through which materials of low MW diffuse from one cell to a neighboring cell. This Homo sapiens (Human) protein is Gap junction delta-4 protein (GJD4).